Here is a 388-residue protein sequence, read N- to C-terminus: G2/mitotic-specific cyclin-B (388 aa).

It belongs to the cyclin family. Cyclin AB subfamily. Interacts with the CDK1 protein kinase to form a serine/threonine kinase holoenzyme complex also known as maturation promoting factor (MPF). The cyclin subunit imparts substrate specificity to the complex.

Essential for the control of the cell cycle at the G2/M (mitosis) transition. The sequence is that of G2/mitotic-specific cyclin-B from Marthasterias glacialis (Spiny starfish).